Reading from the N-terminus, the 285-residue chain is Coagulation factor IX (285 aa).

Sulfotyrosine is present on Tyr23. The N-linked (GlcNAc...) asparagine glycan is linked to Asn25. Thr27 is modified (phosphothreonine; alternate). An O-linked (GalNAc...) threonine; alternate glycan is attached at Thr27. A glycan (N-linked (GlcNAc...) asparagine) is linked at Asn45. Residue Thr47 is glycosylated (O-linked (GalNAc...) threonine). Residues 59–285 form the Peptidase S1 domain; that stretch reads VVGGEDAKPG…YTKVSRYVNW (227 aa). Cys84 and Cys100 form a disulfide bridge. His99 serves as the catalytic Charge relay system. Asn115, Glu120, and Glu123 together coordinate Ca(2+). Asn127 and Asn138 each carry an N-linked (GlcNAc...) asparagine glycan. Asp147 (charge relay system) is an active-site residue. 2 cysteine pairs are disulfide-bonded: Cys214/Cys228 and Cys239/Cys267. The active-site Charge relay system is Ser243.

It belongs to the peptidase S1 family. As to quaternary structure, heterodimer of a light chain and a heavy chain; disulfide-linked. Interacts (inactive and activated) with F11 (activated) in calcium-dependent manner. Interacts with SERPINC1. Activated by factor XIa, which excises the activation peptide. The propeptide can also be removed by snake venom protease. Activated by coagulation factor VIIa-tissue factor (F7-F3) complex in calcium-dependent manner.

It is found in the secreted. It carries out the reaction Selective cleavage of Arg-|-Ile bond in factor X to form factor Xa.. In terms of biological role, factor IX is a vitamin K-dependent plasma protein that participates in the intrinsic pathway of blood coagulation by converting factor X to its active form in the presence of Ca(2+) ions, phospholipids, and factor VIIIa. The protein is Coagulation factor IX (F9) of Cavia porcellus (Guinea pig).